The sequence spans 914 residues: MDKKNDHKNNLIPQPASSFASSQERPTPMMEQYIEIKAVHHDSLLFYRMGDFYELFFNDAIEAAQALGITLTARGKHLGQDIPMCGVPVHAADDYLQKLIACGYRVAVCEQTEDPAEAKKRGSKSVVRRDVVRLVTPGTITEEKLLDPTRANYLMTLSRIKTSDGEDFALSWIDISTGIFRVTESRQEKLLADIMRVDPQEIIVADAFFHDKSHKSLFNVLDHIVSPQPACLFDTLTAERDICTYFKLSTLEGVADYSRCELSAIVAAIRYIEKTQITHRPPLMQPERQNESATLFIDAATRLSLELIRTTSGQRDGSLLKAIDRTVTGGGSRLLIDRLIAPLTTPSAIDTRLDSIDFFLRNPSLAEAIKLVLKGGPDMPRAVSRLALGRGGPRDMATIQRGFEIIRELNQILNNELLPQEISDVQQIFSNLPVSLHCHLEQALADDLPLLKRDGGFIRSNYHKELDEMRALRDESRRVIAELQAQYAQETDIKTLKIKHNNILGYFIEITSTQASGLTNNPQAKARFIHRQTMANAMRFTTTELADLESRIAHAANHALTLELEIFDTLVQEIIEQVEFIRKAAEALAILDVSVALAYLAEEQGYCRPKIDHSLTFHITAGRHPVVEQALRKQAAEPFVANDCDLSVQENQQYAAIWLLTGPNMGGKSTFLRQNALIAIMAQMGSFVPATSAHIGVVDRLFSRVGASDDLARGRSTFMMEMVETATILNHASHHSLVILDEIGRGTSTFDGLSIAWAAVEYLHEVNHCRAILATHFHEMTALTEKLDRLHNVTMKVKNWDGDVVFLHEVTPGAADRSYGVQVAKLAGLPPAVITRATDVLHQLEQGEMAGKGHKLIDDLPLFSLKATSSLNEEKNKHDALHEALKNIHPDELSPKQALEAIYHLKQLEKNNGL.

A disordered region spans residues 1–25 (MDKKNDHKNNLIPQPASSFASSQER). Polar residues predominate over residues 11–25 (LIPQPASSFASSQER). ATP is bound at residue 662 to 669 (GPNMGGKS).

This sequence belongs to the DNA mismatch repair MutS family.

Its function is as follows. This protein is involved in the repair of mismatches in DNA. It is possible that it carries out the mismatch recognition step. This protein has a weak ATPase activity. The protein is DNA mismatch repair protein MutS of Bartonella tribocorum (strain CIP 105476 / IBS 506).